The following is a 313-amino-acid chain: Methionyl-tRNA formyltransferase (313 aa).

Ser110–Pro113 contributes to the (6S)-5,6,7,8-tetrahydrofolate binding site.

It belongs to the Fmt family.

The enzyme catalyses L-methionyl-tRNA(fMet) + (6R)-10-formyltetrahydrofolate = N-formyl-L-methionyl-tRNA(fMet) + (6S)-5,6,7,8-tetrahydrofolate + H(+). Functionally, attaches a formyl group to the free amino group of methionyl-tRNA(fMet). The formyl group appears to play a dual role in the initiator identity of N-formylmethionyl-tRNA by promoting its recognition by IF2 and preventing the misappropriation of this tRNA by the elongation apparatus. This chain is Methionyl-tRNA formyltransferase, found in Lysinibacillus sphaericus (strain C3-41).